A 191-amino-acid chain; its full sequence is Xanthine phosphoribosyltransferase (191 aa).

The xanthine site is built by leucine 20 and asparagine 27. 128–132 (ANGQA) provides a ligand contact to 5-phospho-alpha-D-ribose 1-diphosphate. Lysine 156 is a xanthine binding site.

The protein belongs to the purine/pyrimidine phosphoribosyltransferase family. Xpt subfamily. In terms of assembly, homodimer.

The protein resides in the cytoplasm. The catalysed reaction is XMP + diphosphate = xanthine + 5-phospho-alpha-D-ribose 1-diphosphate. It participates in purine metabolism; XMP biosynthesis via salvage pathway; XMP from xanthine: step 1/1. Functionally, converts the preformed base xanthine, a product of nucleic acid breakdown, to xanthosine 5'-monophosphate (XMP), so it can be reused for RNA or DNA synthesis. The polypeptide is Xanthine phosphoribosyltransferase (Levilactobacillus brevis (strain ATCC 367 / BCRC 12310 / CIP 105137 / JCM 1170 / LMG 11437 / NCIMB 947 / NCTC 947) (Lactobacillus brevis)).